Here is a 193-residue protein sequence, read N- to C-terminus: Phosphoheptose isomerase (193 aa).

The SIS domain occupies 37–193 (IAQSFKNEKK…LIIEKEMQKN (157 aa)). 52–54 (NGG) serves as a coordination point for substrate. H61 and E65 together coordinate Zn(2+). Substrate is bound by residues E65, 93–94 (ND), 119–121 (STS), S124, and Q172. Positions 172 and 180 each coordinate Zn(2+).

It belongs to the SIS family. GmhA subfamily. Homotetramer. It depends on Zn(2+) as a cofactor.

The protein resides in the cytoplasm. It catalyses the reaction 2 D-sedoheptulose 7-phosphate = D-glycero-alpha-D-manno-heptose 7-phosphate + D-glycero-beta-D-manno-heptose 7-phosphate. It participates in carbohydrate biosynthesis; D-glycero-D-manno-heptose 7-phosphate biosynthesis; D-glycero-alpha-D-manno-heptose 7-phosphate and D-glycero-beta-D-manno-heptose 7-phosphate from sedoheptulose 7-phosphate: step 1/1. Functionally, catalyzes the isomerization of sedoheptulose 7-phosphate in D-glycero-D-manno-heptose 7-phosphate. The polypeptide is Phosphoheptose isomerase (Buchnera aphidicola subsp. Acyrthosiphon pisum (strain 5A)).